The chain runs to 336 residues: Glyceraldehyde-3-phosphate dehydrogenase (336 aa).

Residues 12–13, D34, and R79 contribute to the NAD(+) site; that span reads RI. D-glyceraldehyde 3-phosphate is bound by residues 150–152, T181, 210–211, and R233; these read SCT and TG. Residue C151 is the Nucleophile of the active site. N315 contacts NAD(+).

Belongs to the glyceraldehyde-3-phosphate dehydrogenase family. Homotetramer.

The protein resides in the cytoplasm. It catalyses the reaction D-glyceraldehyde 3-phosphate + phosphate + NAD(+) = (2R)-3-phospho-glyceroyl phosphate + NADH + H(+). The protein operates within carbohydrate degradation; glycolysis; pyruvate from D-glyceraldehyde 3-phosphate: step 1/5. This chain is Glyceraldehyde-3-phosphate dehydrogenase (gpdA), found in Aspergillus niger.